The following is a 153-amino-acid chain: Ribonuclease H (153 aa).

The 142-residue stretch at 1-142 folds into the RNase H type-1 domain; sequence MTPEVVIYTD…ADALARKGLS (142 aa). Mg(2+)-binding residues include Asp10, Glu48, Asp70, and Asp134.

This sequence belongs to the RNase H family. Monomer. It depends on Mg(2+) as a cofactor.

It localises to the cytoplasm. The enzyme catalyses Endonucleolytic cleavage to 5'-phosphomonoester.. Its function is as follows. Endonuclease that specifically degrades the RNA of RNA-DNA hybrids. The protein is Ribonuclease H of Phenylobacterium zucineum (strain HLK1).